Here is a 270-residue protein sequence, read N- to C-terminus: uncharacterized protein (270 aa).

The protein belongs to the GSP E family.

This is an uncharacterized protein from Methanocaldococcus jannaschii (strain ATCC 43067 / DSM 2661 / JAL-1 / JCM 10045 / NBRC 100440) (Methanococcus jannaschii).